A 319-amino-acid chain; its full sequence is Acetyl-coenzyme A carboxylase carboxyl transferase subunit alpha (319 aa).

Residues 35-292 form the CoA carboxyltransferase C-terminal domain; sequence EISKLMRRLV…KKTIAEALAE (258 aa).

Belongs to the AccA family. As to quaternary structure, acetyl-CoA carboxylase is a heterohexamer composed of biotin carboxyl carrier protein (AccB), biotin carboxylase (AccC) and two subunits each of ACCase subunit alpha (AccA) and ACCase subunit beta (AccD).

Its subcellular location is the cytoplasm. It carries out the reaction N(6)-carboxybiotinyl-L-lysyl-[protein] + acetyl-CoA = N(6)-biotinyl-L-lysyl-[protein] + malonyl-CoA. Its pathway is lipid metabolism; malonyl-CoA biosynthesis; malonyl-CoA from acetyl-CoA: step 1/1. In terms of biological role, component of the acetyl coenzyme A carboxylase (ACC) complex. First, biotin carboxylase catalyzes the carboxylation of biotin on its carrier protein (BCCP) and then the CO(2) group is transferred by the carboxyltransferase to acetyl-CoA to form malonyl-CoA. The sequence is that of Acetyl-coenzyme A carboxylase carboxyl transferase subunit alpha from Desulfitobacterium hafniense (strain DSM 10664 / DCB-2).